We begin with the raw amino-acid sequence, 158 residues long: Naphthalene 1,2-dioxygenase system, small oxygenase component (158 aa).

It belongs to the bacterial ring-hydroxylating dioxygenase beta subunit family. As to quaternary structure, the naphthalene dioxygenase (NDO) multicomponent enzyme system is composed of an electron transfer component and a dioxygenase component (iron sulfur protein (ISP)). The electron transfer component is composed of a ferredoxin reductase (NdoR) and a ferredoxin (NdoA), and the dioxygenase component is formed of a heterohexamer (trimer of heterodimers) of three large alpha subunits (NdoB) and three small beta subunits (NdoC).

It functions in the pathway aromatic compound metabolism; naphthalene degradation. Component of the naphthalene dioxygenase (NDO) multicomponent enzyme system which catalyzes the incorporation of both atoms of molecular oxygen into naphthalene to form cis-(1R,2S)-dihydroxy-1,2-dihydronaphthalene. The beta subunit seems to have a structural role in the holoenzyme. This chain is Naphthalene 1,2-dioxygenase system, small oxygenase component, found in Pseudomonas fluorescens.